We begin with the raw amino-acid sequence, 107 residues long: DNA-directed RNA polymerase subunit omega (107 aa).

The protein belongs to the RNA polymerase subunit omega family. As to quaternary structure, the RNAP catalytic core consists of 2 alpha, 1 beta, 1 beta' and 1 omega subunit. When a sigma factor is associated with the core the holoenzyme is formed, which can initiate transcription.

It carries out the reaction RNA(n) + a ribonucleoside 5'-triphosphate = RNA(n+1) + diphosphate. Its function is as follows. Promotes RNA polymerase assembly. Latches the N- and C-terminal regions of the beta' subunit thereby facilitating its interaction with the beta and alpha subunits. The sequence is that of DNA-directed RNA polymerase subunit omega from Mycolicibacterium smegmatis (strain ATCC 700084 / mc(2)155) (Mycobacterium smegmatis).